The chain runs to 456 residues: Argininosuccinate lyase (456 aa).

Belongs to the lyase 1 family. Argininosuccinate lyase subfamily.

It localises to the cytoplasm. The enzyme catalyses 2-(N(omega)-L-arginino)succinate = fumarate + L-arginine. Its pathway is amino-acid biosynthesis; L-arginine biosynthesis; L-arginine from L-ornithine and carbamoyl phosphate: step 3/3. In Shewanella pealeana (strain ATCC 700345 / ANG-SQ1), this protein is Argininosuccinate lyase.